The sequence spans 474 residues: Bifunctional protein HldE (474 aa).

Residues 1 to 318 are ribokinase; sequence MKLSMPRFDQ…RAIQREEGSE (318 aa). 194-197 provides a ligand contact to ATP; that stretch reads NLSE. D263 is an active-site residue. The segment at 343-474 is cytidylyltransferase; the sequence is FTNGCFDILH…AIVEKIRGQG (132 aa).

The protein in the N-terminal section; belongs to the carbohydrate kinase PfkB family. In the C-terminal section; belongs to the cytidylyltransferase family. Homodimer.

It carries out the reaction D-glycero-beta-D-manno-heptose 7-phosphate + ATP = D-glycero-beta-D-manno-heptose 1,7-bisphosphate + ADP + H(+). It catalyses the reaction D-glycero-beta-D-manno-heptose 1-phosphate + ATP + H(+) = ADP-D-glycero-beta-D-manno-heptose + diphosphate. It participates in nucleotide-sugar biosynthesis; ADP-L-glycero-beta-D-manno-heptose biosynthesis; ADP-L-glycero-beta-D-manno-heptose from D-glycero-beta-D-manno-heptose 7-phosphate: step 1/4. Its pathway is nucleotide-sugar biosynthesis; ADP-L-glycero-beta-D-manno-heptose biosynthesis; ADP-L-glycero-beta-D-manno-heptose from D-glycero-beta-D-manno-heptose 7-phosphate: step 3/4. Catalyzes the phosphorylation of D-glycero-D-manno-heptose 7-phosphate at the C-1 position to selectively form D-glycero-beta-D-manno-heptose-1,7-bisphosphate. Functionally, catalyzes the ADP transfer from ATP to D-glycero-beta-D-manno-heptose 1-phosphate, yielding ADP-D-glycero-beta-D-manno-heptose. The protein is Bifunctional protein HldE of Pseudomonas savastanoi pv. phaseolicola (strain 1448A / Race 6) (Pseudomonas syringae pv. phaseolicola (strain 1448A / Race 6)).